Consider the following 779-residue polypeptide: Glucan endo-1,3-beta-D-glucosidase 2 (779 aa).

Residues 1 to 71 (MCYSRQAIPP…SNPLADSQVN (71 aa)) form a disordered region. Positions 57 to 71 (RTPSSSNPLADSQVN) are enriched in polar residues. Positions 73-309 (DNIFQSPVLS…NGLICQLSAD (237 aa)) are beta-sandwich subdomain. The GH81 domain maps to 73-779 (DNIFQSPVLS…WSLAYSGAFS (707 aa)). Positions 309 to 400 (DSVPSIDMAA…LTNSFDMQVQ (92 aa)) are alpha/beta subdomain. The sufficient for catalytic activity stretch occupies residues 375 to 779 (IASSLDSTVK…WSLAYSGAFS (405 aa)). The tract at residues 415–779 (NKKADYSQEK…WSLAYSGAFS (365 aa)) is (alpha/beta)6 barrel subdomain. Asp-526 is an active-site residue. Positions 530, 607, 609, and 613 each coordinate (1,3-beta-D-glucosyl)n. Active-site residues include Glu-609 and Glu-613. Residues 678 to 680 (KID) are may provide specificity for triple-helical beta-glucan. Tyr-691 is a binding site for (1,3-beta-D-glucosyl)n.

The protein belongs to the glycosyl hydrolase 81 family.

Its subcellular location is the cytoplasm. It catalyses the reaction Hydrolysis of (1-&gt;3)-beta-D-glucosidic linkages in (1-&gt;3)-beta-D-glucans.. Inhibited by mercury ions. Its function is as follows. Cleaves internal linkages in 1,3-beta-glucan. This is Glucan endo-1,3-beta-D-glucosidase 2 from Saccharomyces cerevisiae (strain ATCC 204508 / S288c) (Baker's yeast).